Here is a 24-residue protein sequence, read N- to C-terminus: Flavin reductase (NADPH) (24 aa).

NADP(+) contacts are provided by G9, T11, G12, and T14.

It belongs to the BLVRB family. As to quaternary structure, monomer. As to expression, detected in erythrocytes (at protein level).

Its subcellular location is the cytoplasm. The enzyme catalyses reduced riboflavin + NADP(+) = riboflavin + NADPH + 2 H(+). It carries out the reaction bilirubin IXbeta + NADP(+) = biliverdin IXbeta + NADPH + H(+). It catalyses the reaction FMNH2 + NAD(+) = FMN + NADH + 2 H(+). The catalysed reaction is FMNH2 + NADP(+) = FMN + NADPH + 2 H(+). The enzyme catalyses S-nitroso-CoA + L-cysteinyl-[protein] = S-nitroso-L-cysteinyl-[protein] + CoA. It carries out the reaction L-cysteinyl-[SCAN] + S-nitroso-CoA = S-nitroso-L-cysteinyl-[SCAN] + CoA. It catalyses the reaction S-nitroso-L-cysteinyl-[SCAN] + L-cysteinyl-[protein] = L-cysteinyl-[SCAN] + S-nitroso-L-cysteinyl-[protein]. Functionally, enzyme that can both act as a NAD(P)H-dependent reductase and a S-nitroso-CoA-dependent nitrosyltransferase. Promotes fetal heme degradation during development. Also expressed in adult tissues, where it acts as a regulator of hematopoiesis, intermediary metabolism (glutaminolysis, glycolysis, TCA cycle and pentose phosphate pathway) and insulin signaling. Has a broad specificity oxidoreductase activity by catalyzing the NAD(P)H-dependent reduction of a variety of flavins, such as riboflavin, FAD or FMN, biliverdins, methemoglobin and PQQ (pyrroloquinoline quinone). Contributes to fetal heme catabolism by catalyzing reduction of biliverdin IXbeta into bilirubin IXbeta in the liver. Biliverdin IXbeta, which constitutes the major heme catabolite in the fetus is not present in adult. Does not reduce bilirubin IXalpha. Can also reduce the complexed Fe(3+) iron to Fe(2+) in the presence of FMN and NADPH. Acts as a protein nitrosyltransferase by catalyzing nitrosylation of cysteine residues of target proteins, such as HMOX2, INSR and IRS1. S-nitroso-CoA-dependent nitrosyltransferase activity is mediated via a 'ping-pong' mechanism: BLVRB first associates with both S-nitroso-CoA and protein substrate, nitric oxide group is then transferred from S-nitroso-CoA to Cys residues of BLVRB and from S-nitroso-BLVRB to the protein substrate. Inhibits insulin signaling by mediating nitrosylation of INSR and IRS1, leading to their inhibition. The protein is Flavin reductase (NADPH) (BLVRB) of Aquarana catesbeiana (American bullfrog).